A 517-amino-acid chain; its full sequence is FAD-dependent monooxygenase dmxR9 (517 aa).

FAD-binding residues include V96 and R162. Residues R243 and Y270 contribute to the active site. The FAD site is built by D365 and A378.

This sequence belongs to the paxM FAD-dependent monooxygenase family. FAD serves as cofactor.

The protein operates within secondary metabolite biosynthesis. In terms of biological role, FAD-dependent monooxygenase; part of the gene cluster that mediates the biosynthesis of the dimeric xanthones cryptosporioptides. The pathway begins with the synthesis of atrochrysone thioester by the polyketide synthase dmx-nrPKS. The atrochrysone carboxyl ACP thioesterase dmxR1 then breaks the thioester bond and releases the atrochrysone carboxylic acid from dmx-nrPKS. Atrochrysone carboxylic acid is decarboxylated by the decarboxylase dmxR15, and oxidized by the anthrone oxygenase dmxR16 to yield emodin. Emodin is then reduced to emodin hydroquinone by the oxidoreductase dmxR7. A-ring reduction by the short chain dehydrogenase dmxR18, dehydration by the scytalone dehydratase-like protein dmxR17 and probable spontaneous re-oxidation, results in overall deoxygenation to chrysophanol. Baeyer-Villiger oxidation by the Baeyer-Villiger monooxygenase (BVMO) dmxR6 then yields monodictylactone in equilibrium with monodictyphenone. In the case of the cryptosporioptides biosynthesis, monodictylactone is reduced at C-12 to an alcohol (by the short chain dehydrogenases dmxR12 or dmxR8) and hydroxylated at C-5 by dmxR9, yielding the electron-rich aromatic which could eliminate H(2)O to form the ortho-quinonemethide, followed by tautomerisation to paraquinone and complete the formal reduction to produce the 10-methylgroup. Conjugate addition of C-4a-OH to the resulting paraquinone by the monooxygenase dmxR10 then gives cyclohexadienone, which is then reduced at C-5 by the short chain dehydrogenase dmxR3 to give the dihydroxanthone. The 6,7-epoxide in the cryptosporioptides could be introduced by the cytochrome P450 monooxygenase dmxL3. The highly reducing PKS dmxL2 manufactures butyrate, which is further carboxylated by dmxL1 to form ethylmalonate. It is not yet clear whether the carboxylation occurs while the butyrate is attached to the ACP of dmxL2, but this unusual fungal metabolite could then be esterified to O-5 by the O-acetyltransferase dmxR13. Finally, dimerization performed by dmxR5 gives the observed dimers cryptosporioptides A, B and C as the final products of the pathway. This Cryptosporiopsis sp. (strain 8999) protein is FAD-dependent monooxygenase dmxR9.